The following is an 87-amino-acid chain: uncharacterized protein (87 aa).

A signal peptide spans 1-26 (MMSTQHFILSLTILIIISNLHDEVNA). 3 cysteine pairs are disulfide-bonded: Cys61–Cys75, Cys68–Cys79, and Cys74–Cys84.

The protein resides in the secreted. This is an uncharacterized protein from Schistosoma japonicum (Blood fluke).